Consider the following 646-residue polypeptide: NADP-dependent malic enzyme 4, chloroplastic (646 aa).

A chloroplast-targeting transit peptide spans 1 to 74; it reads MISLTPSLFL…LETSAADIVP (74 aa). The active-site Proton donor is Tyr194. Arg247 lines the NADP(+) pocket. Catalysis depends on Lys265, which acts as the Proton acceptor. 3 residues coordinate a divalent metal cation: Glu337, Asp338, and Asp361. Residues Asp361, 390-406, and Asn502 each bind NADP(+); that span reads LFLGAGEAGTGIAELIA.

The protein belongs to the malic enzymes family. As to quaternary structure, homodimer and homotetramer. It depends on Mg(2+) as a cofactor. The cofactor is Mn(2+). As to expression, expressed in leaves, stems, flowers and roots, mainly in vascular system. In roots, present in the stele, including the vascular tissue and the pericycle, mainly at emerging lateral roots and at root tips.

The protein resides in the plastid. The protein localises to the chloroplast. It catalyses the reaction (S)-malate + NADP(+) = pyruvate + CO2 + NADPH. The catalysed reaction is oxaloacetate + H(+) = pyruvate + CO2. The protein operates within photosynthesis; C3 acid pathway. Its function is as follows. The chloroplastic ME isoform decarboxylates malate shuttled from neighboring mesophyll cells. The CO(2) released is then refixed by ribulose-bisphosphate carboxylase. This pathway eliminates the photorespiratory loss of CO(2) that occurs in most plants. This is NADP-dependent malic enzyme 4, chloroplastic (NADP-ME4) from Arabidopsis thaliana (Mouse-ear cress).